The sequence spans 221 residues: Carbonic anhydrase (221 aa).

Residues cysteine 38, aspartate 40, histidine 99, and cysteine 102 each coordinate Zn(2+).

It belongs to the beta-class carbonic anhydrase family. Zn(2+) is required as a cofactor.

It catalyses the reaction hydrogencarbonate + H(+) = CO2 + H2O. The sequence is that of Carbonic anhydrase (cynT) from Helicobacter pylori (strain ATCC 700392 / 26695) (Campylobacter pylori).